The chain runs to 170 residues: NADH-quinone oxidoreductase subunit B (170 aa).

[4Fe-4S] cluster is bound by residues cysteine 37, cysteine 38, cysteine 102, and cysteine 131.

It belongs to the complex I 20 kDa subunit family. NDH-1 is composed of 14 different subunits. Subunits NuoB, C, D, E, F, and G constitute the peripheral sector of the complex. It depends on [4Fe-4S] cluster as a cofactor.

It is found in the cell inner membrane. The catalysed reaction is a quinone + NADH + 5 H(+)(in) = a quinol + NAD(+) + 4 H(+)(out). In terms of biological role, NDH-1 shuttles electrons from NADH, via FMN and iron-sulfur (Fe-S) centers, to quinones in the respiratory chain. The immediate electron acceptor for the enzyme in this species is believed to be ubiquinone. Couples the redox reaction to proton translocation (for every two electrons transferred, four hydrogen ions are translocated across the cytoplasmic membrane), and thus conserves the redox energy in a proton gradient. The polypeptide is NADH-quinone oxidoreductase subunit B (Geotalea daltonii (strain DSM 22248 / JCM 15807 / FRC-32) (Geobacter daltonii)).